The chain runs to 92 residues: Small ribosomal subunit protein uS19c (92 aa).

This sequence belongs to the universal ribosomal protein uS19 family.

The protein localises to the plastid. Its function is as follows. Protein S19 forms a complex with S13 that binds strongly to the 16S ribosomal RNA. This is Small ribosomal subunit protein uS19c from Cuscuta gronovii (Common dodder).